The sequence spans 215 residues: Intraflagellar transport protein 43 homolog B (215 aa).

The segment at 1–107 is disordered; the sequence is MDDHLKLGDS…SDGEGDIPVI (107 aa).

It belongs to the IFT43 family. In terms of assembly, component of IFT complex A.

Component of IFT complex A (IFT-A) involved in retrograde ciliary transport along microtubules from the ciliary tip to the base. The sequence is that of Intraflagellar transport protein 43 homolog B (ift43b) from Salmo salar (Atlantic salmon).